Here is a 290-residue protein sequence, read N- to C-terminus: Protease HtpX (290 aa).

The next 2 helical transmembrane spans lie at 6 to 26 (LFLVTNLAVMLVLGVVLNILF) and 36 to 56 (ISGLLMFCAVFGFGGSFISLL). H143 lines the Zn(2+) pocket. E144 is an active-site residue. Zn(2+) is bound at residue H147. The next 2 membrane-spanning stretches (helical) occupy residues 158-178 (LIQGVVNTFVMFFARIVAGVI) and 200-220 (ITVFVLEMAFGVLASMIVMWF). E225 lines the Zn(2+) pocket.

It belongs to the peptidase M48B family. The cofactor is Zn(2+).

It localises to the cell inner membrane. The sequence is that of Protease HtpX from Aeromonas salmonicida (strain A449).